Reading from the N-terminus, the 638-residue chain is Chaperone protein DnaK 2 (638 aa).

Thr-199 is subject to Phosphothreonine; by autocatalysis. Positions 604 to 626 are disordered; sequence AKEQAQSAPEGAQEADAAPADDV. The span at 613–624 shows a compositional bias: low complexity; sequence EGAQEADAAPAD.

The protein belongs to the heat shock protein 70 family.

Its function is as follows. Acts as a chaperone. The polypeptide is Chaperone protein DnaK 2 (Colwellia psychrerythraea (strain 34H / ATCC BAA-681) (Vibrio psychroerythus)).